A 270-amino-acid polypeptide reads, in one-letter code: Putative phosphoenolpyruvate synthase regulatory protein (270 aa).

An ADP-binding site is contributed by 150–157 (GVSRCGKT).

It belongs to the pyruvate, phosphate/water dikinase regulatory protein family. PSRP subfamily.

It carries out the reaction [pyruvate, water dikinase] + ADP = [pyruvate, water dikinase]-phosphate + AMP + H(+). It catalyses the reaction [pyruvate, water dikinase]-phosphate + phosphate + H(+) = [pyruvate, water dikinase] + diphosphate. Bifunctional serine/threonine kinase and phosphorylase involved in the regulation of the phosphoenolpyruvate synthase (PEPS) by catalyzing its phosphorylation/dephosphorylation. The protein is Putative phosphoenolpyruvate synthase regulatory protein of Shewanella putrefaciens (strain CN-32 / ATCC BAA-453).